The following is a 428-amino-acid chain: 3-phosphoshikimate 1-carboxyvinyltransferase (428 aa).

The 3-phosphoshikimate site is built by lysine 20, serine 21, and arginine 25. Phosphoenolpyruvate is bound at residue lysine 20. 2 residues coordinate phosphoenolpyruvate: glycine 92 and arginine 120. 4 residues coordinate 3-phosphoshikimate: serine 166, glutamine 168, aspartate 314, and lysine 341. Glutamine 168 is a binding site for phosphoenolpyruvate. Catalysis depends on aspartate 314, which acts as the Proton acceptor. Arginine 345 and arginine 387 together coordinate phosphoenolpyruvate.

The protein belongs to the EPSP synthase family. As to quaternary structure, monomer.

The protein resides in the cytoplasm. The catalysed reaction is 3-phosphoshikimate + phosphoenolpyruvate = 5-O-(1-carboxyvinyl)-3-phosphoshikimate + phosphate. The protein operates within metabolic intermediate biosynthesis; chorismate biosynthesis; chorismate from D-erythrose 4-phosphate and phosphoenolpyruvate: step 6/7. In terms of biological role, catalyzes the transfer of the enolpyruvyl moiety of phosphoenolpyruvate (PEP) to the 5-hydroxyl of shikimate-3-phosphate (S3P) to produce enolpyruvyl shikimate-3-phosphate and inorganic phosphate. In Listeria monocytogenes serotype 4a (strain HCC23), this protein is 3-phosphoshikimate 1-carboxyvinyltransferase.